Here is a 157-residue protein sequence, read N- to C-terminus: Protein-export protein SecB (157 aa).

Belongs to the SecB family. As to quaternary structure, homotetramer, a dimer of dimers. One homotetramer interacts with 1 SecA dimer.

The protein localises to the cytoplasm. In terms of biological role, one of the proteins required for the normal export of preproteins out of the cell cytoplasm. It is a molecular chaperone that binds to a subset of precursor proteins, maintaining them in a translocation-competent state. It also specifically binds to its receptor SecA. This is Protein-export protein SecB from Photobacterium profundum (strain SS9).